The primary structure comprises 257 residues: Fructose-2,6-bisphosphatase TIGAR B (257 aa).

H11 functions as the Tele-phosphohistidine intermediate in the catalytic mechanism. Catalysis depends on E89, which acts as the Proton donor/acceptor.

It belongs to the phosphoglycerate mutase family.

The protein localises to the cytoplasm. It localises to the nucleus. Its subcellular location is the mitochondrion. It carries out the reaction beta-D-fructose 2,6-bisphosphate + H2O = beta-D-fructose 6-phosphate + phosphate. Fructose-bisphosphatase hydrolyzing fructose-2,6-bisphosphate as well as fructose-1,6-bisphosphate. Acts as a negative regulator of glycolysis by lowering intracellular levels of fructose-2,6-bisphosphate in a p53/TP53-dependent manner, resulting in the pentose phosphate pathway (PPP) activation and NADPH production. Contributes to the generation of reduced glutathione to cause a decrease in intracellular reactive oxygen species (ROS) content, correlating with its ability to protect cells from oxidative or metabolic stress-induced cell death. May play a role in mitophagy inhibition. The chain is Fructose-2,6-bisphosphatase TIGAR B from Danio rerio (Zebrafish).